The sequence spans 210 residues: Prolactin-2 (210 aa).

A signal peptide spans 1–23; that stretch reads MARRSQGTKLHLAVLCLVVSCHA. 2 disulfide bridges follow: C69-C183 and C200-C210.

The protein belongs to the somatotropin/prolactin family.

It is found in the secreted. This Oncorhynchus keta (Chum salmon) protein is Prolactin-2 (prl2).